Here is a 1574-residue protein sequence, read N- to C-terminus: Pentafunctional AROM polypeptide (1574 aa).

Residues 1 to 384 (MSCSNNTEPT…HEPRATTVED (384 aa)) form a 3-dehydroquinate synthase region. NAD(+) contacts are provided by residues 49 to 51 (DTN), 85 to 88 (EISK), 116 to 118 (GGV), and Asp121. Residue Arg132 participates in 7-phospho-2-dehydro-3-deoxy-D-arabino-heptonate binding. Residue 141–142 (TT) coordinates NAD(+). 7-phospho-2-dehydro-3-deoxy-D-arabino-heptonate-binding residues include Asp148 and Lys154. Lys163 lines the NAD(+) pocket. Asn164 lines the 7-phospho-2-dehydro-3-deoxy-D-arabino-heptonate pocket. Residues 181–184 (FLET) and Asn192 each bind NAD(+). Residue Glu196 coordinates Zn(2+). Residues 196 to 199 (EVIK) and Lys250 each bind 7-phospho-2-dehydro-3-deoxy-D-arabino-heptonate. Glu260 functions as the Proton acceptor; for 3-dehydroquinate synthase activity in the catalytic mechanism. Residues 264-268 (RNLLN) and His271 contribute to the 7-phospho-2-dehydro-3-deoxy-D-arabino-heptonate site. Residue His271 coordinates Zn(2+). The active-site Proton acceptor; for 3-dehydroquinate synthase activity is the His275. Residues His287 and Lys356 each coordinate 7-phospho-2-dehydro-3-deoxy-D-arabino-heptonate. Position 287 (His287) interacts with Zn(2+). Residues 397 to 837 (ITPGVSTKLA…WDTLSQSFGL (441 aa)) are EPSP synthase. Cys819 functions as the For EPSP synthase activity in the catalytic mechanism. The segment at 858-1052 (TRSVFIVGMR…TAKEQSFFVS (195 aa)) is shikimate kinase. Residue 865 to 872 (GMRGAGKT) coordinates ATP. A 3-dehydroquinase region spans residues 1053–1266 (LTVPSVDSAV…AAPGQLSAAE (214 aa)). Residue His1169 is the Proton acceptor; for 3-dehydroquinate dehydratase activity of the active site. Catalysis depends on Lys1197, which acts as the Schiff-base intermediate with substrate; for 3-dehydroquinate dehydratase activity. The tract at residues 1279-1574 (AQSFHLFGKP…NGDEIPTSTD (296 aa)) is shikimate dehydrogenase.

This sequence in the N-terminal section; belongs to the sugar phosphate cyclases superfamily. Dehydroquinate synthase family. The protein in the 2nd section; belongs to the EPSP synthase family. In the 3rd section; belongs to the shikimate kinase family. It in the 4th section; belongs to the type-I 3-dehydroquinase family. This sequence in the C-terminal section; belongs to the shikimate dehydrogenase family. Homodimer. Requires Zn(2+) as cofactor.

The protein localises to the cytoplasm. The catalysed reaction is 7-phospho-2-dehydro-3-deoxy-D-arabino-heptonate = 3-dehydroquinate + phosphate. It carries out the reaction 3-dehydroquinate = 3-dehydroshikimate + H2O. The enzyme catalyses shikimate + NADP(+) = 3-dehydroshikimate + NADPH + H(+). It catalyses the reaction shikimate + ATP = 3-phosphoshikimate + ADP + H(+). The catalysed reaction is 3-phosphoshikimate + phosphoenolpyruvate = 5-O-(1-carboxyvinyl)-3-phosphoshikimate + phosphate. The protein operates within metabolic intermediate biosynthesis; chorismate biosynthesis; chorismate from D-erythrose 4-phosphate and phosphoenolpyruvate: step 2/7. It participates in metabolic intermediate biosynthesis; chorismate biosynthesis; chorismate from D-erythrose 4-phosphate and phosphoenolpyruvate: step 3/7. It functions in the pathway metabolic intermediate biosynthesis; chorismate biosynthesis; chorismate from D-erythrose 4-phosphate and phosphoenolpyruvate: step 4/7. Its pathway is metabolic intermediate biosynthesis; chorismate biosynthesis; chorismate from D-erythrose 4-phosphate and phosphoenolpyruvate: step 5/7. The protein operates within metabolic intermediate biosynthesis; chorismate biosynthesis; chorismate from D-erythrose 4-phosphate and phosphoenolpyruvate: step 6/7. Its function is as follows. The AROM polypeptide catalyzes 5 consecutive enzymatic reactions in prechorismate polyaromatic amino acid biosynthesis. The chain is Pentafunctional AROM polypeptide from Verticillium alfalfae (strain VaMs.102 / ATCC MYA-4576 / FGSC 10136) (Verticillium wilt of alfalfa).